A 567-amino-acid chain; its full sequence is Urease subunit alpha (567 aa).

Residues 129 to 567 (GGIDSHIHFI…LPMAQRYFLF (439 aa)) form the Urease domain. Ni(2+)-binding residues include histidine 134, histidine 136, and lysine 217. An N6-carboxylysine modification is found at lysine 217. Histidine 219 is a substrate binding site. 2 residues coordinate Ni(2+): histidine 246 and histidine 272. The active-site Proton donor is the histidine 320. Position 360 (aspartate 360) interacts with Ni(2+).

This sequence belongs to the metallo-dependent hydrolases superfamily. Urease alpha subunit family. Heterotrimer of UreA (gamma), UreB (beta) and UreC (alpha) subunits. Three heterotrimers associate to form the active enzyme. The cofactor is Ni cation. Carboxylation allows a single lysine to coordinate two nickel ions.

Its subcellular location is the cytoplasm. It carries out the reaction urea + 2 H2O + H(+) = hydrogencarbonate + 2 NH4(+). Its pathway is nitrogen metabolism; urea degradation; CO(2) and NH(3) from urea (urease route): step 1/1. This Tolumonas auensis (strain DSM 9187 / NBRC 110442 / TA 4) protein is Urease subunit alpha.